A 746-amino-acid polypeptide reads, in one-letter code: SNF-related serine/threonine-protein kinase (746 aa).

The region spanning 16–269 (YDLDKTLGRG…LEEIESHPWL (254 aa)) is the Protein kinase domain. Residues 22–30 (LGRGHFAVV) and Lys45 each bind ATP. Asp139 (proton acceptor) is an active-site residue. Ser162 carries the post-translational modification Phosphoserine. Position 173 is a phosphothreonine; by LKB1 (Thr173). The UBA domain occupies 291 to 334 (SEEEHNSIIQRMVLGDIADRDAIVEALETNRYNHITATYFLLAE). Ser362, Ser390, Ser482, Ser495, and Ser518 each carry phosphoserine. The tract at residues 383–414 (SHATVPQSPARAGDSVLNGHRSKGLCDPAKKD) is disordered. A compositionally biased stretch (acidic residues) spans 494–503 (ESDDEFDMDE). The segment at 494–638 (ESDDEFDMDE…SSSSSPASAA (145 aa)) is disordered. The segment covering 522–532 (VHKRYHRRKSQ) has biased composition (basic residues). A compositionally biased stretch (low complexity) spans 533–542 (GRGSSCSSSE). Arg534 is subject to Omega-N-methylarginine. The span at 549-558 (ESRRRLDKDS) shows a compositional bias: basic and acidic residues. Gly residues-rich tracts occupy residues 575 to 592 (GSEG…GGGV) and 600 to 614 (QGTG…GGTP). Positions 615-638 (SGTAGSSRRCAGPDSSSSSPASAA) are enriched in low complexity.

This sequence belongs to the protein kinase superfamily. CAMK Ser/Thr protein kinase family. Requires Mg(2+) as cofactor. In terms of processing, autophosphorylated. Phosphorylation on Thr-173 by STK11/LKB1 in complex with STE20-related adapter-alpha (STRADA) pseudo kinase and CAB39. In terms of tissue distribution, ubiquitously expressed in all tissues examined with highest levels in the brain and testis. Strongly expressed in the pyramidal and granule neurons of the hippocampus and also in the cerebellum.

The protein resides in the nucleus. The catalysed reaction is L-seryl-[protein] + ATP = O-phospho-L-seryl-[protein] + ADP + H(+). It catalyses the reaction L-threonyl-[protein] + ATP = O-phospho-L-threonyl-[protein] + ADP + H(+). With respect to regulation, activated by phosphorylation on Thr-173. Functionally, may play a role in hematopoietic cell proliferation or differentiation. Potential mediator of neuronal apoptosis. The polypeptide is SNF-related serine/threonine-protein kinase (Rattus norvegicus (Rat)).